A 165-amino-acid chain; its full sequence is UPF0303 protein BceJ2315_15790 (165 aa).

Belongs to the UPF0303 family.

The chain is UPF0303 protein BceJ2315_15790 from Burkholderia cenocepacia (strain ATCC BAA-245 / DSM 16553 / LMG 16656 / NCTC 13227 / J2315 / CF5610) (Burkholderia cepacia (strain J2315)).